Consider the following 337-residue polypeptide: tRNA N(3)-cytidine methyltransferase METTL2 (337 aa).

The S-adenosyl-L-methionine site is built by tryptophan 66, tyrosine 70, glycine 140, aspartate 165, aspartate 191, and isoleucine 212.

Belongs to the methyltransferase superfamily. METL family. As to quaternary structure, monomer.

The protein resides in the cytoplasm. The catalysed reaction is cytidine(32) in tRNA(Thr) + S-adenosyl-L-methionine = N(3)-methylcytidine(32) in tRNA(Thr) + S-adenosyl-L-homocysteine + H(+). It catalyses the reaction cytidine(32) in tRNA(Arg)(CCU) + S-adenosyl-L-methionine = N(3)-methylcytidine(32) in tRNA(Arg)(CCU) + S-adenosyl-L-homocysteine + H(+). Functionally, S-adenosyl-L-methionine-dependent methyltransferase that mediates N(3)-methylcytidine modification of residue 32 of the tRNA anticodon loop of tRNA(Thr)(UGU) and tRNA(Arg)(CCU). N(3)-methylcytidine methylation by mettl2 requires the N6-threonylcarbamoylation of tRNA (t6A37) by the EKC/KEOPS complex as prerequisite. This is tRNA N(3)-cytidine methyltransferase METTL2 (mettl2) from Xenopus tropicalis (Western clawed frog).